The sequence spans 280 residues: Dopamine receptor-interacting protein 1 (280 aa).

As to quaternary structure, interacts with DRD1, the dopamine D1 receptor.

In terms of biological role, could be a regulator of the dopamine receptor signaling pathway. This Bos taurus (Bovine) protein is Dopamine receptor-interacting protein 1 (DORIP1).